Reading from the N-terminus, the 1132-residue chain is Tyrosine-protein kinase JAK2 (1132 aa).

The interaction with cytokine/interferon/growth hormone receptors stretch occupies residues 1 to 239 (MGMACLTMTE…RYRFRRFIQQ (239 aa)). One can recognise an FERM domain in the interval 37 to 380 (PVLQVYLYHS…GYYRLTADAH (344 aa)). Residue Tyr-119 is modified to Phosphotyrosine; by autocatalysis. Phosphotyrosine is present on residues Tyr-372 and Tyr-373. The region spanning 401-482 (HGPISMDFAI…NLKDLLNCYQ (82 aa)) is the SH2; atypical domain. At Ser-523 the chain carries Phosphoserine. The region spanning 545 to 809 (LIFNESLGQG…AVIRDLNSLF (265 aa)) is the Protein kinase 1 domain. Phosphotyrosine occurs at positions 570 and 813. The Protein kinase 2 domain maps to 849 to 1124 (LKFLQQLGKG…SFRDLSLRVD (276 aa)). Residue 855 to 863 (LGKGNFGSV) participates in ATP binding. At Tyr-868 the chain carries Phosphotyrosine; by autocatalysis. An ATP-binding site is contributed by Lys-882. Phosphotyrosine; by autocatalysis is present on residues Tyr-966 and Tyr-972. Residue Asp-976 is the Proton acceptor of the active site. 2 positions are modified to phosphotyrosine; by autocatalysis: Tyr-1007 and Tyr-1008.

The protein belongs to the protein kinase superfamily. Tyr protein kinase family. JAK subfamily. Interacts with IL23R, SKB1 and STAM2. Interacts with EPOR. Interacts with LYN. Interacts with SIRPA. Interacts with SH2B1. Interacts with TEC. Interacts with IFNGR2 (via intracellular domain). Interacts with LEPR (Isoform B). Interacts with HSP90AB1; promotes functional activation in a heat shock-dependent manner. Interacts with STRA6. Interacts with ASB2; the interaction targets JAK2 for Notch-induced proteasomal degradation. Interacts with MPL/TPOR. Mg(2+) is required as a cofactor. Post-translationally, autophosphorylated, leading to regulate its activity. Leptin promotes phosphorylation on tyrosine residues, including phosphorylation on Tyr-813. Autophosphorylation on Tyr-119 in response to EPO down-regulates its kinase activity. Autophosphorylation on Tyr-868, Tyr-966 and Tyr-972 in response to growth hormone (GH) are required for maximal kinase activity. Also phosphorylated by TEC. Phosphorylated on tyrosine residues in response to interferon gamma signaling. Phosphorylated on tyrosine residues in response to a signaling cascade that is activated by increased cellular retinol. In terms of processing, undergoes Notch-induced ubiquitination and subsequent proteasomal degradation which is mediated by ASB1 or ASB2, the substrate-recognition components of probable ECS E3 ubiquitin-protein ligase complexes. Ubiquitously expressed throughout most tissues.

The protein localises to the endomembrane system. It localises to the cytoplasm. It is found in the nucleus. The enzyme catalyses L-tyrosyl-[protein] + ATP = O-phospho-L-tyrosyl-[protein] + ADP + H(+). Regulated by autophosphorylation, can both activate or decrease activity. Heme regulates its activity by enhancing the phosphorylation on Tyr-1007 and Tyr-1008. Non-receptor tyrosine kinase involved in various processes such as cell growth, development, differentiation or histone modifications. Mediates essential signaling events in both innate and adaptive immunity. In the cytoplasm, plays a pivotal role in signal transduction via its association with type I receptors such as growth hormone (GHR), prolactin (PRLR), leptin (LEPR), erythropoietin (EPOR), thrombopoietin receptor (MPL/TPOR); or type II receptors including IFN-alpha, IFN-beta, IFN-gamma and multiple interleukins. Following ligand-binding to cell surface receptors, phosphorylates specific tyrosine residues on the cytoplasmic tails of the receptor, creating docking sites for STATs proteins. Subsequently, phosphorylates the STATs proteins once they are recruited to the receptor. Phosphorylated STATs then form homodimer or heterodimers and translocate to the nucleus to activate gene transcription. For example, cell stimulation with erythropoietin (EPO) during erythropoiesis leads to JAK2 autophosphorylation, activation, and its association with erythropoietin receptor (EPOR) that becomes phosphorylated in its cytoplasmic domain. Then, STAT5 (STAT5A or STAT5B) is recruited, phosphorylated and activated by JAK2. Once activated, dimerized STAT5 translocates into the nucleus and promotes the transcription of several essential genes involved in the modulation of erythropoiesis. Part of a signaling cascade that is activated by increased cellular retinol and that leads to the activation of STAT5 (STAT5A or STAT5B). In addition, JAK2 mediates angiotensin-2-induced ARHGEF1 phosphorylation. Plays a role in cell cycle by phosphorylating CDKN1B. Cooperates with TEC through reciprocal phosphorylation to mediate cytokine-driven activation of FOS transcription. In the nucleus, plays a key role in chromatin by specifically mediating phosphorylation of 'Tyr-41' of histone H3 (H3Y41ph), a specific tag that promotes exclusion of CBX5 (HP1 alpha) from chromatin. Up-regulates the potassium voltage-gated channel activity of KCNA3. This chain is Tyrosine-protein kinase JAK2, found in Mus musculus (Mouse).